The sequence spans 125 residues: Holo-[acyl-carrier-protein] synthase (125 aa).

Positions 8 and 57 each coordinate Mg(2+).

This sequence belongs to the P-Pant transferase superfamily. AcpS family. Mg(2+) is required as a cofactor.

It is found in the cytoplasm. The catalysed reaction is apo-[ACP] + CoA = holo-[ACP] + adenosine 3',5'-bisphosphate + H(+). In terms of biological role, transfers the 4'-phosphopantetheine moiety from coenzyme A to a Ser of acyl-carrier-protein. This is Holo-[acyl-carrier-protein] synthase from Aromatoleum aromaticum (strain DSM 19018 / LMG 30748 / EbN1) (Azoarcus sp. (strain EbN1)).